Reading from the N-terminus, the 603-residue chain is Deuterosome assembly protein 1 (603 aa).

5 coiled-coil regions span residues cysteine 14–threonine 59, methionine 85–glutamine 197, isoleucine 227–serine 278, glutamine 336–lysine 399, and histidine 454–serine 480. Position 546 is a phosphoserine (serine 546). The stretch at alanine 557–asparagine 600 forms a coiled coil.

Belongs to the CEP63 family. Interacts with CEP152; the interaction is mutually exclusive with CEP63.

The protein localises to the cytoplasm. Functionally, key structural component of the deuterosome, a structure that promotes de novo centriole amplification in multiciliated cells. Deuterosome-mediated centriole amplification occurs in terminally differentiated multiciliated cells and can generate more than 100 centrioles. Probably sufficient for the specification and formation of the deuterosome inner core. Interacts with CEP152 and recruits PLK4 to activate centriole biogenesis. This chain is Deuterosome assembly protein 1, found in Macaca fascicularis (Crab-eating macaque).